Consider the following 205-residue polypeptide: Rho-related GTP-binding protein RhoQ (205 aa).

A GTP-binding site is contributed by 16–23 (GDGAVGKT). The Effector region motif lies at 38 to 46 (YVPTVFDHY). GTP contacts are provided by residues 63–67 (DTAGQ) and 121–124 (TQID). Position 202 is a cysteine methyl ester (Cys202). Cys202 is lipidated: S-farnesyl cysteine. Positions 203–205 (LIT) are cleaved as a propeptide — removed in mature form.

The protein belongs to the small GTPase superfamily. Rho family. As to quaternary structure, interacts with CDC42EP4 in a GTP-dependent manner. Interacts with ARHGAP33/TCGAP. Interacts with CDC42EP1, CDC42EP2, CDC42EP3, PARD6A, PARD6G (and probably PARD6B) in a GTP-dependent manner. Part of a quaternary complex containing PARD3, some PARD6 protein (PARD6A, PARD6B or PARD6G) and some atypical PKC protein (PRKCI or PRKCZ). Interacts with EXO70 in a GTP-dependent manner. Interacts with GOPC. Post-translationally, may be post-translationally modified by both palmitoylation and polyisoprenylation.

The protein resides in the cytoplasm. The protein localises to the cell membrane. With respect to regulation, regulated by guanine nucleotide exchange factors (GEFs) which promote the exchange of bound GDP for free GTP, GTPase activating proteins (GAPs) which increase the GTP hydrolysis activity, and GDP dissociation inhibitors which inhibit the dissociation of the nucleotide from the GTPase. Functionally, plasma membrane-associated small GTPase which cycles between an active GTP-bound and an inactive GDP-bound state. In active state binds to a variety of effector proteins to regulate cellular responses. Involved in epithelial cell polarization processes. May play a role in CFTR trafficking to the plasma membrane. Causes the formation of thin, actin-rich surface projections called filopodia. The chain is Rho-related GTP-binding protein RhoQ (RHOQ) from Homo sapiens (Human).